The sequence spans 408 residues: 3-phosphoshikimate 1-carboxyvinyltransferase (408 aa).

3-phosphoshikimate is bound by residues K10, S11, and R15. Residue K10 participates in phosphoenolpyruvate binding. Residues G79 and R107 each contribute to the phosphoenolpyruvate site. 3-phosphoshikimate is bound by residues S150, S151, Q152, S179, E297, and H324. Q152 lines the phosphoenolpyruvate pocket. Catalysis depends on E297, which acts as the Proton acceptor. Phosphoenolpyruvate-binding residues include R328, R369, and K394.

Belongs to the EPSP synthase family. In terms of assembly, monomer.

The protein resides in the cytoplasm. The enzyme catalyses 3-phosphoshikimate + phosphoenolpyruvate = 5-O-(1-carboxyvinyl)-3-phosphoshikimate + phosphate. Its pathway is metabolic intermediate biosynthesis; chorismate biosynthesis; chorismate from D-erythrose 4-phosphate and phosphoenolpyruvate: step 6/7. Functionally, catalyzes the transfer of the enolpyruvyl moiety of phosphoenolpyruvate (PEP) to the 5-hydroxyl of shikimate-3-phosphate (S3P) to produce enolpyruvyl shikimate-3-phosphate and inorganic phosphate. The protein is 3-phosphoshikimate 1-carboxyvinyltransferase of Corynebacterium efficiens (strain DSM 44549 / YS-314 / AJ 12310 / JCM 11189 / NBRC 100395).